Reading from the N-terminus, the 538-residue chain is Nicotinate phosphoribosyltransferase (538 aa).

2 residues coordinate nicotinate: Y21 and T210. Position 213 is a phosphohistidine (H213). R318 contacts nicotinate. A 5-phospho-alpha-D-ribose 1-diphosphate-binding site is contributed by T380. Phosphoserine is present on S537.

Belongs to the NAPRTase family. As to quaternary structure, homodimer. Requires Mg(2+) as cofactor. It depends on Mn(2+) as a cofactor. In terms of processing, transiently phosphorylated on a His residue during the reaction cycle. Phosphorylation strongly increases the affinity for substrates and increases the rate of nicotinate D-ribonucleotide production. Dephosphorylation regenerates the low-affinity form of the enzyme, leading to product release.

The protein localises to the cytoplasm. It is found in the cytosol. It catalyses the reaction nicotinate + 5-phospho-alpha-D-ribose 1-diphosphate + ATP + H2O = nicotinate beta-D-ribonucleotide + ADP + phosphate + diphosphate. It functions in the pathway cofactor biosynthesis; NAD(+) biosynthesis; nicotinate D-ribonucleotide from nicotinate: step 1/1. Functionally, catalyzes the first step in the biosynthesis of NAD from nicotinic acid, the ATP-dependent synthesis of beta-nicotinate D-ribonucleotide from nicotinate and 5-phospho-D-ribose 1-phosphate. Helps prevent cellular oxidative stress via its role in NAD biosynthesis. The protein is Nicotinate phosphoribosyltransferase (NAPRT) of Homo sapiens (Human).